Reading from the N-terminus, the 135-residue chain is Small ribosomal subunit protein bS18 (135 aa).

Residues 1-65 are disordered; that stretch reads MARPDMGGPK…GDEGGGRRGF (65 aa). Positions 9 to 41 are enriched in gly residues; that stretch reads PKMGGGFGGPRSGGFGGGGGGGGFGGGGFGGGR. Over residues 42 to 61 the composition is skewed to basic and acidic residues; that stretch reads GGDRGDRGDRDDRGGDEGGG.

Belongs to the bacterial ribosomal protein bS18 family. Part of the 30S ribosomal subunit. Forms a tight heterodimer with protein bS6.

Binds as a heterodimer with protein bS6 to the central domain of the 16S rRNA, where it helps stabilize the platform of the 30S subunit. The sequence is that of Small ribosomal subunit protein bS18 from Anaeromyxobacter dehalogenans (strain 2CP-C).